Here is a 108-residue protein sequence, read N- to C-terminus: UPF0060 membrane protein CC_1976 (108 aa).

Helical transmembrane passes span 4–24 (FAIY…FWAW), 27–47 (LGKS…FALL), 59–79 (AFAA…QVVE), and 85–105 (RWDL…LFGP).

This sequence belongs to the UPF0060 family.

It is found in the cell inner membrane. The chain is UPF0060 membrane protein CC_1976 from Caulobacter vibrioides (strain ATCC 19089 / CIP 103742 / CB 15) (Caulobacter crescentus).